The chain runs to 325 residues: Elongation factor P--(R)-beta-lysine ligase (325 aa).

Residue 76-78 (SPE) participates in substrate binding. Residues 100 to 102 (RNE) and asparagine 109 each bind ATP. Tyrosine 118 is a binding site for substrate. 244–245 (EL) contacts ATP. Glutamate 251 contacts substrate. Residue glycine 300 participates in ATP binding.

It belongs to the class-II aminoacyl-tRNA synthetase family. EpmA subfamily. As to quaternary structure, homodimer.

The enzyme catalyses D-beta-lysine + L-lysyl-[protein] + ATP = N(6)-((3R)-3,6-diaminohexanoyl)-L-lysyl-[protein] + AMP + diphosphate + H(+). In terms of biological role, with EpmB is involved in the beta-lysylation step of the post-translational modification of translation elongation factor P (EF-P). Catalyzes the ATP-dependent activation of (R)-beta-lysine produced by EpmB, forming a lysyl-adenylate, from which the beta-lysyl moiety is then transferred to the epsilon-amino group of a conserved specific lysine residue in EF-P. This is Elongation factor P--(R)-beta-lysine ligase from Pectobacterium carotovorum subsp. carotovorum (strain PC1).